A 417-amino-acid polypeptide reads, in one-letter code: MSLDTPNEKPAGKARARKAPASKAGATNAASTSSSTKAITDTLLTVLSGNLQARVPKELVGESGVELAHLLNQVLDQFAASEHRKHVAAQEIDQALDALIGLVREGDLSRWNTTTEDPQLGPLLEGFGKVIETLRTFVREINEAALRLSSSANQVLAASTQHETSSTEQAAAIHETTATMEELKHASAQIAENAGSVARVAEETLGAARAGRGAIGEFIQAMQQIRSDGVAVADSIAKLSKRVERIGTVVEVIDEIADRSDLLALNAALEGSRAGEAGKGFSIVAAEMRRLAENVLDSTKEIKNLITEIREATAAAAGAAEASKSATESGEKLGAVAAQAVEGILAGVQETSDAARVINLATQQQRTATEQVVASMAEIEDVTRQTTQASKQATGAAAELTQLAGRLAELIKRFKAD.

Positions 1–11 (MSLDTPNEKPA) are enriched in basic and acidic residues. The interval 1 to 34 (MSLDTPNEKPAGKARARKAPASKAGATNAASTSS) is disordered. Low complexity predominate over residues 21–34 (ASKAGATNAASTSS). The 237-residue stretch at 144–380 (AALRLSSSAN…QVVASMAEIE (237 aa)) folds into the Methyl-accepting transducer domain.

This sequence belongs to the methyl-accepting chemotaxis (MCP) protein family. Methylated. Saturated fatty acids capric acid and lauric acid stimulate methylation. Short-chain alcohols, such as isoamyl alcohol, and some other solvents cause demethylation.

It is found in the cytoplasm. Its function is as follows. Methyl-accepting taxis protein necessary for the proper aggregation of cells to form fruiting bodies. Frz genes define a system of signal transduction analogous to the enterobacterial chemotaxis systems. The polypeptide is Frizzy aggregation protein FrzCD (frzCD) (Myxococcus xanthus).